Reading from the N-terminus, the 150-residue chain is Peptide methionine sulfoxide reductase MsrB (150 aa).

Positions 9-132 (EAELKRTLTK…NSAALKFIPF (124 aa)) constitute a MsrB domain. Cysteine 121 serves as the catalytic Nucleophile.

It belongs to the MsrB Met sulfoxide reductase family.

The catalysed reaction is L-methionyl-[protein] + [thioredoxin]-disulfide + H2O = L-methionyl-(R)-S-oxide-[protein] + [thioredoxin]-dithiol. This Mycoplasma genitalium (strain ATCC 33530 / DSM 19775 / NCTC 10195 / G37) (Mycoplasmoides genitalium) protein is Peptide methionine sulfoxide reductase MsrB.